The chain runs to 181 residues: UPF0302 protein ABC1905 (181 aa).

This sequence belongs to the UPF0302 family.

In Shouchella clausii (strain KSM-K16) (Alkalihalobacillus clausii), this protein is UPF0302 protein ABC1905.